Consider the following 100-residue polypeptide: Urease subunit gamma (100 aa).

It belongs to the urease gamma subunit family. In terms of assembly, heterotrimer of UreA (gamma), UreB (beta) and UreC (alpha) subunits. Three heterotrimers associate to form the active enzyme.

It localises to the cytoplasm. The enzyme catalyses urea + 2 H2O + H(+) = hydrogencarbonate + 2 NH4(+). Its pathway is nitrogen metabolism; urea degradation; CO(2) and NH(3) from urea (urease route): step 1/1. The polypeptide is Urease subunit gamma (Paraburkholderia phymatum (strain DSM 17167 / CIP 108236 / LMG 21445 / STM815) (Burkholderia phymatum)).